Reading from the N-terminus, the 272-residue chain is Imidazole glycerol phosphate synthase subunit HisF (272 aa).

Catalysis depends on residues Asp-11 and Asp-130.

It belongs to the HisA/HisF family. Heterodimer of HisH and HisF.

The protein localises to the cytoplasm. The catalysed reaction is 5-[(5-phospho-1-deoxy-D-ribulos-1-ylimino)methylamino]-1-(5-phospho-beta-D-ribosyl)imidazole-4-carboxamide + L-glutamine = D-erythro-1-(imidazol-4-yl)glycerol 3-phosphate + 5-amino-1-(5-phospho-beta-D-ribosyl)imidazole-4-carboxamide + L-glutamate + H(+). Its pathway is amino-acid biosynthesis; L-histidine biosynthesis; L-histidine from 5-phospho-alpha-D-ribose 1-diphosphate: step 5/9. Functionally, IGPS catalyzes the conversion of PRFAR and glutamine to IGP, AICAR and glutamate. The HisF subunit catalyzes the cyclization activity that produces IGP and AICAR from PRFAR using the ammonia provided by the HisH subunit. This is Imidazole glycerol phosphate synthase subunit HisF from Methanococcus maripaludis (strain C5 / ATCC BAA-1333).